A 382-amino-acid chain; its full sequence is Deoxyuridine 5'-triphosphate nucleotidohydrolase (382 aa).

Over residues 1 to 12 the composition is skewed to pro residues; sequence MIKPNIPAPVRP. Disordered regions lie at residues 1–60 and 97–118; these read MIKP…MMIS and LLRDGPEAPPREPTPKEARRPE. Over residues 100–118 the composition is skewed to basic and acidic residues; that stretch reads DGPEAPPREPTPKEARRPE.

The protein belongs to the dUTPase family. Requires Mg(2+) as cofactor.

The enzyme catalyses dUTP + H2O = dUMP + diphosphate + H(+). Its pathway is pyrimidine metabolism; dUMP biosynthesis; dUMP from dCTP (dUTP route): step 2/2. Functionally, involved in nucleotide metabolism: produces dUMP, the immediate precursor of thymidine nucleotides and decreases the intracellular concentration of dUTP to avoid uracil incorporation into viral DNA. The chain is Deoxyuridine 5'-triphosphate nucleotidohydrolase from Murid herpesvirus 1 (strain Smith) (MuHV-1).